Reading from the N-terminus, the 744-residue chain is Prestin (744 aa).

The Cytoplasmic segment spans residues 1–75 (MDHAEENEIP…PITKWLPAYK (75 aa)). The helical transmembrane segment at 76-105 (FKEYVLGDLVSGISTGVLQLPQGLAFAMLA) threads the bilayer. The Extracellular segment spans residues 106–108 (AVP). The chain crosses the membrane as a helical span at residues 109-126 (PVFGLYSSFYPVIMYCFF). The Cytoplasmic portion of the chain corresponds to 127–137 (GTSRHISIGPF). The helical transmembrane segment at 138–151 (AVISLMIGGVAVRL) threads the bilayer. Residues 152 to 168 (VPDDIVIPGGVNATNGT) lie on the Extracellular side of the membrane. The Involved in motor function signature appears at 158–168 (IPGGVNATNGT). N-linked (GlcNAc...) asparagine glycosylation is found at asparagine 163 and asparagine 166. A helical membrane pass occupies residues 169–196 (EARDALRVKVAMSVTLLSGIIQFCLGVC). At 197–206 (RFGFVAIYLT) the chain is on the cytoplasmic side. The chain crosses the membrane as a helical span at residues 207–230 (EPLVRGFTTAAAVHVFTSMLKYLF). Topologically, residues 231-241 (GVKTKRYSGIF) are extracellular. Positions 242-253 (SVVYSTVAVLQN) form an intramembrane region, helical. Residues 254–258 (VKNLN) are Extracellular-facing. The chain crosses the membrane as a helical span at residues 259 to 282 (VCSLGVGLMVFGLLLGGKEFNERF). Residues 283–291 (KEKLPAPIP) are Cytoplasmic-facing. The helical transmembrane segment at 292–307 (LEFFAVVMGTGISAGF) threads the bilayer. Residues 308–332 (NLHESYSVDVVGTLPLGLLPPANPD) lie on the Extracellular side of the membrane. A helical membrane pass occupies residues 333–367 (TSLFHLVYVDAIAIAIVGFSVTISMAKTLANKHGY). Residues 368 to 370 (QVD) are Cytoplasmic-facing. Residues 371-388 (GNQELIALGICNSIGSLF) form a helical membrane-spanning segment. Over 389–396 (QTFSISCS) the chain is Extracellular. The helical transmembrane segment at 397–406 (LSRSLVQEGT) threads the bilayer. Serine 398 is a salicylate binding site. Topologically, residues 407–410 (GGKT) are cytoplasmic. The chain crosses the membrane as a helical span at residues 411–432 (QLAGCLASLMILLVILATGFLF). Residues 433–436 (ESLP) lie on the Extracellular side of the membrane. Residues 437 to 464 (QAVLSAIVIVNLKGMFMQFSDLPFFWRT) traverse the membrane as a helical segment. A topological domain (cytoplasmic) is located at residue serine 465. A helical membrane pass occupies residues 466 to 481 (KIELTIWLTTFVSSLF). Over 482–483 (LG) the chain is Extracellular. The chain crosses the membrane as a helical span at residues 484–504 (LDYGLITAVIIALLTVIYRTQ). Positions 505–718 (SPSYKVLGQL…AVLGSQVREA (214 aa)) are extended region for STAS domain. Residues 505–744 (SPSYKVLGQL…PNATPTTPEA (240 aa)) lie on the Cytoplasmic side of the membrane. The STAS domain maps to 525 to 713 (AYEEVKEIPG…HSIHDAVLGS (189 aa)). The tract at residues 720-744 (AEQEATASLPQEDMEPNATPTTPEA) is disordered.

It belongs to the SLC26A/SulP transporter (TC 2.A.53) family. Homodimer. Interacts (via STAS domain) with CALM; this interaction is calcium-dependent and the STAS domain interacts with only one lobe of CALM which is an elongated conformation. Interacts with MYH1. As to expression, expressed in the outer hair cells (OHC) of the organ of Corti of the inner ear. Also weak expression in brain and testis. Very weakly expressed in heart, spleen, muscle and lactating mammary glands. Expressed in cardiac myocytes (at protein level), both in the surface sarcolemma and along the t-tubule. Weakly expressed in skeletal muscle cells (at protein level).

It localises to the lateral cell membrane. The enzyme catalyses 2 hydrogencarbonate(in) + chloride(out) = 2 hydrogencarbonate(out) + chloride(in). Voltage-sensitive motor protein that drives outer hair cell (OHC) electromotility (eM) and participates in sound amplification in the hearing organ. Converts changes in the transmembrane electric potential into mechanical displacements resulting in the coupling of its expansion to movement of a charged voltage sensor across the lipid membrane. The nature of the voltage sensor is not completely clear, and two models compete. In the first model, acts as an incomplete transporter where intracellular chloride anion acts as extrinsic voltage sensor that drives conformational change in the protein which is sufficient to produce a length change in the plane of the membrane and hence in the length of the OHC. The second model in which multiple charged amino acid residues are distributed at the intracellular and extracellular membrane interfaces that form an intrinsic voltage sensor, whose movement produces the non-linear capacitance (NLC). However, the effective voltage sensor may be the result of a hybrid voltage sensor, assembled from intrinsic charge (charged residues) and extrinsic charge (bound anion). Notably, binding of anions to the anion-binding pocket partially neutralizes the intrinsic positive charge rather than to form an electrically negative sensor, therefore remaining charge may serve as voltage sensor that, after depolarization, moves from down (expanded state) to up (contracted) conformation, which is accompanied by an eccentric contraction of the intermembrane cross-sectional area of the protein as well as a major increase in the hydrophobic thickness of the protein having as consequences the plasma membrane thickening and the cell contraction after membrane depolarization. The anion-binding pocket transits from the inward-open (Down) state, where it is exposed toward the intracellular solvent in the absence of anion, to the occluded (Up) state upon anion binding. Salicylate competes for the anion-binding site and inhibits the voltage-sensor movement, and therefore inhibits the charge transfer and electromotility by displacing Cl(-) from the anion-binding site and by preventing the structural transitions to the contracted state. In addition, can act as a weak Cl(-)/HCO3(-) antiporter across the cell membrane and so regulate the intracellular pH of the outer hair cells (OHCs), while firstly found as being unable to mediate electrogenic anion transport. Moreover, supports a role in cardiac mechanical amplification serving as an elastic element to enhance the actomyosin- based sarcomere contraction system. The polypeptide is Prestin (Mus musculus (Mouse)).